Reading from the N-terminus, the 61-residue chain is Protein A40 homolog (61 aa).

Over 1-11 the chain is Cytoplasmic; it reads MTMNKPKTNYA. A helical; Signal-anchor for type II membrane protein membrane pass occupies residues 12–32; it reads GYACCVICGLIVGIIFTATLL. Topologically, residues 33-61 are extracellular; it reads KAVERKLIHTPLIDKTIKDAYIREDCPTD.

This sequence belongs to the poxviridae A40 protein family.

Its subcellular location is the host membrane. The sequence is that of Protein A40 homolog (A45R) from Homo sapiens (Human).